A 148-amino-acid polypeptide reads, in one-letter code: Transcriptional repressor NrdR (148 aa).

Residues 3 to 32 fold into a zinc finger; that stretch reads CPKCSSEESKVVDSRQAEDAIRRRRVCESC. An ATP-cone domain is found at 47-137; it reads LLVIKKDDKR…VYRSFKDVSE (91 aa).

It belongs to the NrdR family. Zn(2+) serves as cofactor.

Functionally, negatively regulates transcription of bacterial ribonucleotide reductase nrd genes and operons by binding to NrdR-boxes. In Lactococcus lactis subsp. lactis (strain IL1403) (Streptococcus lactis), this protein is Transcriptional repressor NrdR.